Reading from the N-terminus, the 342-residue chain is Holliday junction branch migration complex subunit RuvB (342 aa).

Residues 1 to 22 (MTLKPVREVSPGSQEGEERLEQ) form a disordered region. The segment at 1 to 185 (MTLKPVREVS…FPIQERLGYY (185 aa)) is large ATPase domain (RuvB-L). ATP-binding positions include Leu24, Arg25, Gly66, Lys69, Thr70, Ser71, 132–134 (EDY), Arg175, Tyr185, and Arg222. Thr70 is a Mg(2+) binding site. Positions 186–256 (EPTELREIAV…IVETTLERLE (71 aa)) are small ATPAse domain (RuvB-S). The segment at 259 to 342 (GRGLDAMDRR…RPQGKQGSLI (84 aa)) is head domain (RuvB-H). DNA-binding residues include Arg295, Arg314, and Arg319.

Belongs to the RuvB family. In terms of assembly, homohexamer. Forms an RuvA(8)-RuvB(12)-Holliday junction (HJ) complex. HJ DNA is sandwiched between 2 RuvA tetramers; dsDNA enters through RuvA and exits via RuvB. An RuvB hexamer assembles on each DNA strand where it exits the tetramer. Each RuvB hexamer is contacted by two RuvA subunits (via domain III) on 2 adjacent RuvB subunits; this complex drives branch migration. In the full resolvosome a probable DNA-RuvA(4)-RuvB(12)-RuvC(2) complex forms which resolves the HJ.

The protein localises to the cytoplasm. It carries out the reaction ATP + H2O = ADP + phosphate + H(+). Its function is as follows. The RuvA-RuvB-RuvC complex processes Holliday junction (HJ) DNA during genetic recombination and DNA repair, while the RuvA-RuvB complex plays an important role in the rescue of blocked DNA replication forks via replication fork reversal (RFR). RuvA specifically binds to HJ cruciform DNA, conferring on it an open structure. The RuvB hexamer acts as an ATP-dependent pump, pulling dsDNA into and through the RuvAB complex. RuvB forms 2 homohexamers on either side of HJ DNA bound by 1 or 2 RuvA tetramers; 4 subunits per hexamer contact DNA at a time. Coordinated motions by a converter formed by DNA-disengaged RuvB subunits stimulates ATP hydrolysis and nucleotide exchange. Immobilization of the converter enables RuvB to convert the ATP-contained energy into a lever motion, pulling 2 nucleotides of DNA out of the RuvA tetramer per ATP hydrolyzed, thus driving DNA branch migration. The RuvB motors rotate together with the DNA substrate, which together with the progressing nucleotide cycle form the mechanistic basis for DNA recombination by continuous HJ branch migration. Branch migration allows RuvC to scan DNA until it finds its consensus sequence, where it cleaves and resolves cruciform DNA. This chain is Holliday junction branch migration complex subunit RuvB, found in Anaeromyxobacter sp. (strain Fw109-5).